We begin with the raw amino-acid sequence, 107 residues long: Nucleoid-associated protein Mmar10_0436 (107 aa).

Belongs to the YbaB/EbfC family. In terms of assembly, homodimer.

The protein localises to the cytoplasm. Its subcellular location is the nucleoid. Its function is as follows. Binds to DNA and alters its conformation. May be involved in regulation of gene expression, nucleoid organization and DNA protection. The polypeptide is Nucleoid-associated protein Mmar10_0436 (Maricaulis maris (strain MCS10) (Caulobacter maris)).